The primary structure comprises 380 residues: Cystathionine beta-lyase (380 aa).

K196 carries the N6-(pyridoxal phosphate)lysine modification.

Belongs to the trans-sulfuration enzymes family. It depends on pyridoxal 5'-phosphate as a cofactor.

The protein localises to the cytoplasm. It carries out the reaction L,L-cystathionine + H2O = L-homocysteine + pyruvate + NH4(+). The enzyme catalyses an S-substituted L-cysteine + H2O = a thiol + pyruvate + NH4(+). It functions in the pathway amino-acid biosynthesis; L-methionine biosynthesis via de novo pathway; L-homocysteine from L-cystathionine: step 1/1. The enzymatic degradation of amino acids in cheese is believed to generate aroma compounds and therefore to be essential for flavor development. Cystathionine beta-lyase (CBL) can convert cystathionine to homocysteine but is also able to catalyze an alpha, gamma elimination. With methionine as a substrate, it produces volatile sulfur compounds which are important for flavor formation in Gouda cheese. This is Cystathionine beta-lyase (metC) from Lactococcus lactis subsp. lactis (strain IL1403) (Streptococcus lactis).